The primary structure comprises 290 residues: uncharacterized protein (290 aa).

3 disordered regions span residues 89–157 (CSEN…EELS), 172–217 (MANT…MESS), and 261–290 (TANTPPTVVHVSKPSSETSVSIPPSSAVKK). Composition is skewed to basic and acidic residues over residues 106–124 (DFSKTTVDETIKEKSEKQP) and 142–152 (KTEKLVSKEPS). 2 stretches are compositionally biased toward polar residues: residues 172 to 183 (MANTSSSANRTG) and 193 to 202 (KPTTAVQAST). Composition is skewed to low complexity over residues 207–217 (MSSAESAMESS) and 274–290 (PSSETSVSIPPSSAVKK).

This is an uncharacterized protein from Caenorhabditis elegans.